We begin with the raw amino-acid sequence, 354 residues long: Uroporphyrinogen decarboxylase (354 aa).

Residues 27–31 (RQAGR), Asp-77, Tyr-154, Thr-209, and His-327 each bind substrate.

It belongs to the uroporphyrinogen decarboxylase family. As to quaternary structure, homodimer.

Its subcellular location is the cytoplasm. It carries out the reaction uroporphyrinogen III + 4 H(+) = coproporphyrinogen III + 4 CO2. Its pathway is porphyrin-containing compound metabolism; protoporphyrin-IX biosynthesis; coproporphyrinogen-III from 5-aminolevulinate: step 4/4. Catalyzes the decarboxylation of four acetate groups of uroporphyrinogen-III to yield coproporphyrinogen-III. This is Uroporphyrinogen decarboxylase from Salmonella agona (strain SL483).